A 431-amino-acid polypeptide reads, in one-letter code: Trigger factor (431 aa).

Residues 165–250 (GDTVVIDFDG…IHELKRKELP (86 aa)) enclose the PPIase FKBP-type domain.

Belongs to the FKBP-type PPIase family. Tig subfamily.

Its subcellular location is the cytoplasm. The enzyme catalyses [protein]-peptidylproline (omega=180) = [protein]-peptidylproline (omega=0). Involved in protein export. Acts as a chaperone by maintaining the newly synthesized protein in an open conformation. Functions as a peptidyl-prolyl cis-trans isomerase. The chain is Trigger factor from Leuconostoc mesenteroides subsp. mesenteroides (strain ATCC 8293 / DSM 20343 / BCRC 11652 / CCM 1803 / JCM 6124 / NCDO 523 / NBRC 100496 / NCIMB 8023 / NCTC 12954 / NRRL B-1118 / 37Y).